The primary structure comprises 398 residues: 1-deoxy-D-xylulose 5-phosphate reductoisomerase (398 aa).

Positions 14, 15, 16, 17, 42, and 128 each coordinate NADPH. K129 is a 1-deoxy-D-xylulose 5-phosphate binding site. NADPH is bound at residue E130. D154 is a Mn(2+) binding site. S155, E156, S185, and H208 together coordinate 1-deoxy-D-xylulose 5-phosphate. E156 is a Mn(2+) binding site. G214 is an NADPH binding site. Residues S221, N226, K227, and E230 each coordinate 1-deoxy-D-xylulose 5-phosphate. Mn(2+) is bound at residue E230.

Belongs to the DXR family. The cofactor is Mg(2+). Mn(2+) serves as cofactor.

It catalyses the reaction 2-C-methyl-D-erythritol 4-phosphate + NADP(+) = 1-deoxy-D-xylulose 5-phosphate + NADPH + H(+). The protein operates within isoprenoid biosynthesis; isopentenyl diphosphate biosynthesis via DXP pathway; isopentenyl diphosphate from 1-deoxy-D-xylulose 5-phosphate: step 1/6. Catalyzes the NADPH-dependent rearrangement and reduction of 1-deoxy-D-xylulose-5-phosphate (DXP) to 2-C-methyl-D-erythritol 4-phosphate (MEP). The polypeptide is 1-deoxy-D-xylulose 5-phosphate reductoisomerase (Dechloromonas aromatica (strain RCB)).